The primary structure comprises 358 residues: Methylthioribose-1-phosphate isomerase (358 aa).

Residues 54–56 (RGA), Arg96, and Gln205 contribute to the substrate site. Residue Asp246 is the Proton donor of the active site. 256–257 (NK) contributes to the substrate binding site.

It belongs to the eIF-2B alpha/beta/delta subunits family. MtnA subfamily.

The enzyme catalyses 5-(methylsulfanyl)-alpha-D-ribose 1-phosphate = 5-(methylsulfanyl)-D-ribulose 1-phosphate. It functions in the pathway amino-acid biosynthesis; L-methionine biosynthesis via salvage pathway; L-methionine from S-methyl-5-thio-alpha-D-ribose 1-phosphate: step 1/6. Functionally, catalyzes the interconversion of methylthioribose-1-phosphate (MTR-1-P) into methylthioribulose-1-phosphate (MTRu-1-P). This Stutzerimonas stutzeri (strain A1501) (Pseudomonas stutzeri) protein is Methylthioribose-1-phosphate isomerase.